The primary structure comprises 180 residues: Ribulose bisphosphate carboxylase small subunit, chloroplastic 2 (180 aa).

The transit peptide at 1–56 (MASSVLSSAAVATVSRTPAQASMVAPFTGLKSTVGFPATKKNDDITSLASNGGRVQ) directs the protein to the chloroplast.

Belongs to the RuBisCO small chain family. In terms of assembly, heterohexadecamer of 8 large and 8 small subunits.

The protein localises to the plastid. The protein resides in the chloroplast. Functionally, ruBisCO catalyzes two reactions: the carboxylation of D-ribulose 1,5-bisphosphate, the primary event in carbon dioxide fixation, as well as the oxidative fragmentation of the pentose substrate. Both reactions occur simultaneously and in competition at the same active site. Although the small subunit is not catalytic it is essential for maximal activity. The protein is Ribulose bisphosphate carboxylase small subunit, chloroplastic 2 of Spinacia oleracea (Spinach).